We begin with the raw amino-acid sequence, 420 residues long: Methanogen homoaconitase large subunit (420 aa).

Residues cysteine 302, cysteine 362, and cysteine 365 each coordinate [4Fe-4S] cluster.

The protein belongs to the aconitase/IPM isomerase family. LeuC type 2 subfamily. In terms of assembly, heterotetramer of 2 HacA and 2 HacB proteins. The cofactor is [4Fe-4S] cluster.

It carries out the reaction (2R)-homocitrate = (2R,3S)-homoisocitrate. It catalyses the reaction (2R)-homocitrate = cis-homoaconitate + H2O. The enzyme catalyses (2R,3S)-homoisocitrate = cis-homoaconitate + H2O. The catalysed reaction is cis-(homo)2aconitate + H2O = (2R,3S)-iso(homo)2citrate. It carries out the reaction cis-(homo)3aconitate + H2O = (2R,3S)-iso(homo)3citrate. It catalyses the reaction (R)-malate = maleate + H2O. The enzyme catalyses cis-aconitate + H2O = D-threo-isocitrate. Its pathway is organic acid metabolism; 2-oxosuberate biosynthesis. Component of a hydro-lyase with broad substrate specificity for cis-unsaturated tricarboxylic acids. Catalyzes both the reversible dehydration of (R)-homocitrate ((R)-2-hydroxybutane-1,2,4-tricarboxylate) to produce cis-homoaconitate ((Z)-but-1-ene-1,2,4-tricarboxylate), and its hydration to homoisocitrate ((1R,2S)-1-hydroxybutane-1,2,4-tricarboxylate). Is also able to hydrate the analogous longer chain substrates cis-homo(2)-aconitate, cis-homo(3)-aconitate, and even the non-physiological cis-homo(4)-aconitate with similar efficiency. These reactions are part of the biosynthesis pathway of coenzyme B. Can also catalyze the hydration of maleate to (R)-malate, and that of cis-aconitate. Cannot catalyze the hydration of citraconate and the dehydration of (S)-homocitrate, citramalate, 2-isopropylmalate, 3-isopropylmalate, citrate or threo-DL-isocitrate. The protein is Methanogen homoaconitase large subunit (hacA) of Methanocaldococcus jannaschii (strain ATCC 43067 / DSM 2661 / JAL-1 / JCM 10045 / NBRC 100440) (Methanococcus jannaschii).